The following is a 145-amino-acid chain: Putative transcriptional regulatory protein PYRAB13000 (145 aa).

The protein belongs to the Tfx family.

Putative transcriptional regulator. This Pyrococcus abyssi (strain GE5 / Orsay) protein is Putative transcriptional regulatory protein PYRAB13000.